A 321-amino-acid chain; its full sequence is Phosphate-import protein PhnD (321 aa).

An N-terminal signal peptide occupies residues 1 to 22 (MKIRAHHKIATAAACVALLASA). Cysteine 23 is lipidated: N-palmitoyl cysteine. Cysteine 23 carries S-diacylglycerol cysteine lipidation.

Belongs to the phosphate/phosphite/phosphonate binding protein family. The complex is composed of two ATP-binding proteins (PhnC), two transmembrane proteins (PhnE) and a solute-binding protein (PhnD).

Its subcellular location is the cell membrane. Functionally, part of the ABC transporter complex PhnCDE involved in phosphate import. Responsible for phosphate binding. The protein is Phosphate-import protein PhnD (phnD) of Mycolicibacterium smegmatis (strain ATCC 700084 / mc(2)155) (Mycobacterium smegmatis).